Reading from the N-terminus, the 399-residue chain is Argininosuccinate synthase (399 aa).

8 to 16 (AYSGGLDTS) contributes to the ATP binding site. Y87 serves as a coordination point for L-citrulline. G117 contributes to the ATP binding site. T119, N123, and D124 together coordinate L-aspartate. N123 is a binding site for L-citrulline. L-citrulline contacts are provided by R127, S175, E260, and Y272.

This sequence belongs to the argininosuccinate synthase family. Type 1 subfamily. In terms of assembly, homotetramer.

It is found in the cytoplasm. It catalyses the reaction L-citrulline + L-aspartate + ATP = 2-(N(omega)-L-arginino)succinate + AMP + diphosphate + H(+). Its pathway is amino-acid biosynthesis; L-arginine biosynthesis; L-arginine from L-ornithine and carbamoyl phosphate: step 2/3. This Rhodococcus jostii (strain RHA1) protein is Argininosuccinate synthase.